An 806-amino-acid polypeptide reads, in one-letter code: Mitochondrial intermediate peptidase (806 aa).

The N-terminal 29 residues, 1 to 29 (MLSRHLTVLRSACRVSHDLRVPSTQAVRK), are a transit peptide targeting the mitochondrion. Residue H581 participates in Zn(2+) binding. E582 is an active-site residue. Zn(2+) contacts are provided by H585 and H588.

It belongs to the peptidase M3 family. Zn(2+) serves as cofactor.

Its subcellular location is the mitochondrion matrix. It carries out the reaction Release of an N-terminal octapeptide as second stage of processing of some proteins imported into the mitochondrion.. In terms of biological role, cleaves proteins, imported into the mitochondrion, to their mature size. While most mitochondrial precursor proteins are processed to the mature form in one step by mitochondrial processing peptidase (MPP), the sequential cleavage by MIP of an octapeptide after initial processing by MPP is a required step for a subgroup of nuclear-encoded precursor proteins destined for the matrix or the inner membrane. This is Mitochondrial intermediate peptidase (OCT1) from Malassezia globosa (strain ATCC MYA-4612 / CBS 7966) (Dandruff-associated fungus).